The following is a 319-amino-acid chain: Thioredoxin reductase (319 aa).

37–44 (ERGVPGGQ) contributes to the FAD binding site. Cysteine 136 and cysteine 139 are joined by a disulfide. 279 to 288 (DVRAKSLRQI) serves as a coordination point for FAD.

It belongs to the class-II pyridine nucleotide-disulfide oxidoreductase family. In terms of assembly, homodimer. FAD serves as cofactor.

It is found in the cytoplasm. The enzyme catalyses [thioredoxin]-dithiol + NADP(+) = [thioredoxin]-disulfide + NADPH + H(+). The chain is Thioredoxin reductase (trxB) from Listeria monocytogenes serovar 1/2a (strain ATCC BAA-679 / EGD-e).